An 809-amino-acid chain; its full sequence is Leucine--tRNA ligase (809 aa).

The 'HIGH' region motif lies at P40–H50. A 'KMSKS' region motif is present at residues K579–S583. K582 lines the ATP pocket.

Belongs to the class-I aminoacyl-tRNA synthetase family.

The protein localises to the cytoplasm. The enzyme catalyses tRNA(Leu) + L-leucine + ATP = L-leucyl-tRNA(Leu) + AMP + diphosphate. This Campylobacter lari (strain RM2100 / D67 / ATCC BAA-1060) protein is Leucine--tRNA ligase.